The chain runs to 111 residues: Integration host factor subunit alpha (111 aa).

The protein belongs to the bacterial histone-like protein family. In terms of assembly, heterodimer of an alpha and a beta chain.

Functionally, this protein is one of the two subunits of integration host factor, a specific DNA-binding protein that functions in genetic recombination as well as in transcriptional and translational control. In Chelativorans sp. (strain BNC1), this protein is Integration host factor subunit alpha.